We begin with the raw amino-acid sequence, 460 residues long: Phosphoglucomutase (460 aa).

Ser-103 functions as the Phosphoserine intermediate in the catalytic mechanism. Ser-103 serves as a coordination point for Mg(2+). Substrate contacts are provided by residues 103 to 104 and Lys-113; that span reads SH. Residues Asp-239, Asp-241, and Asp-243 each contribute to the Mg(2+) site. Substrate is bound by residues 243–244, Thr-303, and 322–324; these read DR and EMS.

This sequence belongs to the phosphohexose mutase family. Requires Mg(2+) as cofactor.

It is found in the cytoplasm. The catalysed reaction is alpha-D-glucose 1-phosphate = alpha-D-glucose 6-phosphate. Functionally, this enzyme participates in both the breakdown and synthesis of glucose. This is Phosphoglucomutase (pgm) from Neisseria meningitidis serogroup B (strain ATCC BAA-335 / MC58).